Here is a 465-residue protein sequence, read N- to C-terminus: Siroheme synthase (465 aa).

A precorrin-2 dehydrogenase /sirohydrochlorin ferrochelatase region spans residues 1-203 (MEYLPLFHNL…GRTAEAERLL (203 aa)). NAD(+)-binding positions include 22–23 (EI) and 43–44 (PS). S128 is subject to Phosphoserine. A uroporphyrinogen-III C-methyltransferase region spans residues 216–465 (GEVYLVGAGP…WFEGAQAAGR (250 aa)). Residue P225 coordinates S-adenosyl-L-methionine. D248 serves as the catalytic Proton acceptor. The Proton donor role is filled by K270. Residues 301 to 303 (GGD), I306, 331 to 332 (TA), M383, and G412 each bind S-adenosyl-L-methionine.

It in the N-terminal section; belongs to the precorrin-2 dehydrogenase / sirohydrochlorin ferrochelatase family. The protein in the C-terminal section; belongs to the precorrin methyltransferase family.

The catalysed reaction is uroporphyrinogen III + 2 S-adenosyl-L-methionine = precorrin-2 + 2 S-adenosyl-L-homocysteine + H(+). It catalyses the reaction precorrin-2 + NAD(+) = sirohydrochlorin + NADH + 2 H(+). It carries out the reaction siroheme + 2 H(+) = sirohydrochlorin + Fe(2+). It participates in cofactor biosynthesis; adenosylcobalamin biosynthesis; precorrin-2 from uroporphyrinogen III: step 1/1. The protein operates within cofactor biosynthesis; adenosylcobalamin biosynthesis; sirohydrochlorin from precorrin-2: step 1/1. It functions in the pathway porphyrin-containing compound metabolism; siroheme biosynthesis; precorrin-2 from uroporphyrinogen III: step 1/1. Its pathway is porphyrin-containing compound metabolism; siroheme biosynthesis; siroheme from sirohydrochlorin: step 1/1. It participates in porphyrin-containing compound metabolism; siroheme biosynthesis; sirohydrochlorin from precorrin-2: step 1/1. Its function is as follows. Multifunctional enzyme that catalyzes the SAM-dependent methylations of uroporphyrinogen III at position C-2 and C-7 to form precorrin-2 via precorrin-1. Then it catalyzes the NAD-dependent ring dehydrogenation of precorrin-2 to yield sirohydrochlorin. Finally, it catalyzes the ferrochelation of sirohydrochlorin to yield siroheme. The polypeptide is Siroheme synthase (Stutzerimonas stutzeri (strain A1501) (Pseudomonas stutzeri)).